Here is a 708-residue protein sequence, read N- to C-terminus: Quinohemoprotein alcohol dehydrogenase (708 aa).

A signal peptide spans 1–31; that stretch reads MERLIDNSHGWPGRMVWLLAACLGSAAAFAQ. Pyrroloquinoline quinone is bound at residue Glu101. Cys147 and Cys148 are joined by a disulfide. Pyrroloquinoline quinone is bound by residues Arg153, Thr198, and 214–215; that span reads GA. Ca(2+) is bound at residue Glu216. Thr274 lines the pyrroloquinoline quinone pocket. Ca(2+)-binding residues include Asn294 and Asp339. Asp339 serves as the catalytic Proton acceptor. Pyrroloquinoline quinone contacts are provided by residues Lys366, 425 to 426, and Val575; that span reads NW. Positions 619 to 708 constitute a Cytochrome c domain; sequence YDPAKVEAGT…GTADAIRPKP (90 aa). Residues Cys635, Cys638, His639, and Met678 each contribute to the heme c site.

Belongs to the bacterial PQQ dehydrogenase family. As to quaternary structure, monomer. Pyrroloquinoline quinone is required as a cofactor. It depends on Ca(2+) as a cofactor. Heme c serves as cofactor. In the crystallographic structures Trp-543 is oxidized to 2'-hydroxytryptophan.

The protein resides in the periplasm. It carries out the reaction 2 oxidized [azurin] + a primary alcohol = 2 reduced [azurin] + an aldehyde + 2 H(+). Functionally, catalyzes the dye-linked oxidation of primary alcohols to the corresponding aldehydes and the (subsequent) oxidation of the aldehydes to carboxylic acids. Methanol is not a substrate. This Comamonas testosteroni (Pseudomonas testosteroni) protein is Quinohemoprotein alcohol dehydrogenase.